The chain runs to 232 residues: 5'-methylthioadenosine/S-adenosylhomocysteine nucleosidase (232 aa).

Residue E12 is the Proton acceptor of the active site. Substrate is bound by residues G78, I152, and 173–174 (ME). D197 acts as the Proton donor in catalysis.

Belongs to the PNP/UDP phosphorylase family. MtnN subfamily. In terms of assembly, homodimer.

The enzyme catalyses S-adenosyl-L-homocysteine + H2O = S-(5-deoxy-D-ribos-5-yl)-L-homocysteine + adenine. It carries out the reaction S-methyl-5'-thioadenosine + H2O = 5-(methylsulfanyl)-D-ribose + adenine. The catalysed reaction is 5'-deoxyadenosine + H2O = 5-deoxy-D-ribose + adenine. The protein operates within amino-acid biosynthesis; L-methionine biosynthesis via salvage pathway; S-methyl-5-thio-alpha-D-ribose 1-phosphate from S-methyl-5'-thioadenosine (hydrolase route): step 1/2. In terms of biological role, catalyzes the irreversible cleavage of the glycosidic bond in both 5'-methylthioadenosine (MTA) and S-adenosylhomocysteine (SAH/AdoHcy) to adenine and the corresponding thioribose, 5'-methylthioribose and S-ribosylhomocysteine, respectively. Also cleaves 5'-deoxyadenosine, a toxic by-product of radical S-adenosylmethionine (SAM) enzymes, into 5-deoxyribose and adenine. Thus, is required for in vivo function of the radical SAM enzymes biotin synthase and lipoic acid synthase, that are inhibited by 5'-deoxyadenosine accumulation. This Escherichia fergusonii (strain ATCC 35469 / DSM 13698 / CCUG 18766 / IAM 14443 / JCM 21226 / LMG 7866 / NBRC 102419 / NCTC 12128 / CDC 0568-73) protein is 5'-methylthioadenosine/S-adenosylhomocysteine nucleosidase.